The chain runs to 72 residues: Delta-actitoxin-Avd2b 1 (72 aa).

An N-terminal signal peptide occupies residues 1 to 21 (MMNRLLVFLMLGAAFMLVVSA). Residues 22-42 (NDAYGDEPAFKDLNQGDESLG) constitute a propeptide that is removed on maturation. Disulfide bonds link cysteine 47/cysteine 62, cysteine 48/cysteine 56, and cysteine 50/cysteine 67.

This sequence belongs to the sea anemone short toxin (type III) family.

Its subcellular location is the secreted. It localises to the nematocyst. In terms of biological role, voltage-gated sodium channel (Nav) inhibitor. 1 uM completely inhibits insect voltage-gated sodium channel inactivation (DmNav1 from D.melanogaster). The polypeptide is Delta-actitoxin-Avd2b 1 (Anemonia viridis (Snakelocks anemone)).